We begin with the raw amino-acid sequence, 490 residues long: Gallate decarboxylase (490 aa).

Residue Asp165 coordinates Mn(2+). Prenylated FMN is bound by residues 168 to 170 (IHR) and Gly187. Mn(2+) is bound at residue Glu233. Catalysis depends on Glu289, which acts as the Proton acceptor.

Belongs to the UbiD family. Requires prenylated FMN as cofactor. The cofactor is Mn(2+).

It catalyses the reaction 3,4,5-trihydroxybenzoate + H(+) = 1,2,3-trihydroxybenzene + CO2. The enzyme catalyses 3,4-dihydroxybenzoate + H(+) = catechol + CO2. Its function is as follows. Involved in tannin degradation. Catalyzes the decarboxylation of gallic acid and protocatechuic acid to pyrogallol and catechol, respectively. This chain is Gallate decarboxylase, found in Lactiplantibacillus plantarum (strain ATCC BAA-793 / NCIMB 8826 / WCFS1) (Lactobacillus plantarum).